Here is a 641-residue protein sequence, read N- to C-terminus: FACT complex subunit SSRP1-A (641 aa).

The segment at 459–561 is disordered; it reads TDDDAVDPHL…DPNAPKRAMT (103 aa). The span at 476–487 shows a compositional bias: acidic residues; that stretch reads GDEESDEEDEDF. Basic and acidic residues predominate over residues 512 to 524; sequence GGEKEKLSKKEAS. Residues 556 to 624 constitute a DNA-binding region (HMG box); it reads PKRAMTPFMY…RYEKESAVYR (69 aa).

The protein belongs to the SSRP1 family. In terms of assembly, component of the FACT complex, a stable heterodimer of SPT16 and SSRP1.

The protein resides in the nucleus. It localises to the chromosome. Its function is as follows. Component of the FACT complex, a general chromatin factor that acts to reorganize nucleosomes. The FACT complex is involved in multiple processes that require DNA as a template such as mRNA elongation, DNA replication and DNA repair. During transcription elongation the FACT complex acts as a histone chaperone that both destabilizes and restores nucleosomal structure. It facilitates the passage of RNA polymerase II and transcription by promoting the dissociation of one histone H2A-H2B dimer from the nucleosome, then subsequently promotes the reestablishment of the nucleosome following the passage of RNA polymerase II. Binds specifically to double-stranded DNA. This is FACT complex subunit SSRP1-A (SSRP1-A) from Oryza sativa subsp. japonica (Rice).